Consider the following 128-residue polypeptide: Sm-like protein LSM1B (128 aa).

A Sm domain is found at 10–85 (YLSTSLASYL…VVLIGELDTE (76 aa)).

The protein belongs to the snRNP Sm proteins family. As to quaternary structure, component of the heptameric LSM1-LSM7 complex that forms a seven-membered ring structure with a donut shape. The LSM subunits are arranged in the order LSM1, LSM2, LSM3, LSM6, LSM5, LSM7 and LSM4. LSM1B subunit interacts only with its two neighboring subunits, LSM2 and LSM4. As to expression, expressed in roots, leaves, stems, flowers and siliques.

The protein resides in the cytoplasm. It localises to the P-body. Its function is as follows. Component of the cytoplasmic LSM1-LSM7 complex which is involved in mRNA degradation by promoting decapping and leading to accurate 5'-3' mRNA decay. LSM1A and LSM1B are essential for the formation of the cytoplasmic LSM1-LSM7 complex which regulates developmental gene expression by the decapping of specific development-related transcripts. Required for P-body formation during heat stress. This is Sm-like protein LSM1B from Arabidopsis thaliana (Mouse-ear cress).